The chain runs to 306 residues: Beta-lactamase (306 aa).

The tat-type signal signal peptide spans 1–34 (MDRTTARPNRRAVLATGVGAALAATAAAAGPAHA). Residue Ser82 is the Acyl-ester intermediate of the active site. Substrate is bound at residue 250–252 (KTG).

This sequence belongs to the class-A beta-lactamase family. Post-translationally, predicted to be exported by the Tat system. The position of the signal peptide cleavage has not been experimentally proven.

The enzyme catalyses a beta-lactam + H2O = a substituted beta-amino acid. The sequence is that of Beta-lactamase (blaF) from Streptomyces fradiae (Streptomyces roseoflavus).